The sequence spans 539 residues: Membrane protein insertase YidC (539 aa).

The next 5 membrane-spanning stretches (helical) occupy residues 6–26 (TLLV…WQVA), 341–361 (SVIQ…TFIV), 416–436 (LGGC…YWAL), 454–474 (LSAQ…MFLI), and 495–515 (PVMF…YWLV).

The protein belongs to the OXA1/ALB3/YidC family. Type 1 subfamily. Interacts with the Sec translocase complex via SecD. Specifically interacts with transmembrane segments of nascent integral membrane proteins during membrane integration.

The protein localises to the cell inner membrane. Functionally, required for the insertion and/or proper folding and/or complex formation of integral membrane proteins into the membrane. Involved in integration of membrane proteins that insert both dependently and independently of the Sec translocase complex, as well as at least some lipoproteins. Aids folding of multispanning membrane proteins. In Vibrio vulnificus (strain YJ016), this protein is Membrane protein insertase YidC.